A 488-amino-acid polypeptide reads, in one-letter code: Aspartyl/glutamyl-tRNA(Asn/Gln) amidotransferase subunit B (488 aa).

This sequence belongs to the GatB/GatE family. GatB subfamily. In terms of assembly, heterotrimer of A, B and C subunits.

The catalysed reaction is L-glutamyl-tRNA(Gln) + L-glutamine + ATP + H2O = L-glutaminyl-tRNA(Gln) + L-glutamate + ADP + phosphate + H(+). The enzyme catalyses L-aspartyl-tRNA(Asn) + L-glutamine + ATP + H2O = L-asparaginyl-tRNA(Asn) + L-glutamate + ADP + phosphate + 2 H(+). Functionally, allows the formation of correctly charged Asn-tRNA(Asn) or Gln-tRNA(Gln) through the transamidation of misacylated Asp-tRNA(Asn) or Glu-tRNA(Gln) in organisms which lack either or both of asparaginyl-tRNA or glutaminyl-tRNA synthetases. The reaction takes place in the presence of glutamine and ATP through an activated phospho-Asp-tRNA(Asn) or phospho-Glu-tRNA(Gln). This is Aspartyl/glutamyl-tRNA(Asn/Gln) amidotransferase subunit B from Ralstonia nicotianae (strain ATCC BAA-1114 / GMI1000) (Ralstonia solanacearum).